Reading from the N-terminus, the 79-residue chain is Short neurotoxin 2 (79 aa).

The signal sequence occupies residues 1 to 21 (MKTLLLTLVMVTIMCLDLGYT). Cystine bridges form between Cys24–Cys41, Cys34–Cys59, Cys63–Cys71, and Cys72–Cys77.

Belongs to the three-finger toxin family. Short-chain subfamily. Type III alpha-neurotoxin sub-subfamily. As to expression, expressed by the venom gland.

The protein resides in the secreted. Binds with high affinity to muscle nicotinic acetylcholine receptor (nAChR) and hinders acetylcholine binding to the receptor, thereby impairing neuromuscular transmission. Competes with the binding of alpha-bungarotoxin on muscle AChR (from Torpedo) with an IC(50) of 0.30 uM. Causes muscle paralysis, spasms and increased respiration. The protein is Short neurotoxin 2 of Pseudonaja textilis (Eastern brown snake).